We begin with the raw amino-acid sequence, 425 residues long: UPF0597 protein VP2173 (425 aa).

Belongs to the UPF0597 family.

The sequence is that of UPF0597 protein VP2173 from Vibrio parahaemolyticus serotype O3:K6 (strain RIMD 2210633).